The following is a 520-amino-acid chain: Ribonuclease Y (520 aa).

A helical membrane pass occupies residues 1 to 21 (MEILIIVIAAVVGLALGFAIA). The 86-residue stretch at 210-295 (CVSVFNLESD…EVVKKTRKQI (86 aa)) folds into the KH domain. Residues 336–429 (LLQHSREVAK…VQVCDAISGA (94 aa)) enclose the HD domain.

It belongs to the RNase Y family.

The protein resides in the cell membrane. Its function is as follows. Endoribonuclease that initiates mRNA decay. The sequence is that of Ribonuclease Y from Christiangramia forsetii (strain DSM 17595 / CGMCC 1.15422 / KT0803) (Gramella forsetii).